Here is a 350-residue protein sequence, read N- to C-terminus: Renin receptor (350 aa).

The first 17 residues, 1 to 17, serve as a signal peptide directing secretion; the sequence is MAVLVVLLFFLVAGALG. Topologically, residues 18 to 302 are extracellular; the sequence is NEFSILRSPG…YNLAYKYNLE (285 aa). Residues 303–323 traverse the membrane as a helical segment; sequence YSVVFNLVLWIMIGLALAVII. Over 324 to 350 the chain is Cytoplasmic; it reads TSYNIWNMDPGYDSIIYRMTNQKIRID. Positions 346–350 match the Mediates retrograde transport to the ER motif; the sequence is KIRID.

In terms of assembly, interacts with renin. Accessory component of the multisubunit proton-transporting vacuolar (V)-ATPase protein pump. Interacts (via N-terminus) with ATP6AP1 (via N-terminus). Interacts with ATP6V0D1; ATP6V0D1 is a V-ATPase complex subunit and the interaction promotes V-ATPase complex assembly. Interacts with TMEM9; TMEM9 is a V-ATPase assembly regulator and the interaction induces the interaction with ATP6V0D1. Interacts with VMA21 (via N-terminus); VMA21 is a V-ATPase accessory component. Phosphorylated. In terms of processing, proteolytically cleaved by a furin-like convertase in the trans-Golgi network to generate N- and C-terminal fragments. Expressed in glutamatergic and GABAergic neurons with highest levels in the cortex, the hippocampus, the medial habenular nucleus, the cerebellum, the medulla and the olfactory bulb (at protein level).

The protein localises to the endoplasmic reticulum membrane. The protein resides in the lysosome membrane. It localises to the cytoplasmic vesicle. It is found in the autophagosome membrane. Its subcellular location is the cell projection. The protein localises to the dendritic spine membrane. The protein resides in the axon. It localises to the endosome membrane. It is found in the clathrin-coated vesicle membrane. Its subcellular location is the secretory vesicle. The protein localises to the synaptic vesicle membrane. Functionally, multifunctional protein which functions as a renin, prorenin cellular receptor and is involved in the assembly of the lysosomal proton-transporting V-type ATPase (V-ATPase) and the acidification of the endo-lysosomal system. May mediate renin-dependent cellular responses by activating ERK1 and ERK2. By increasing the catalytic efficiency of renin in AGT/angiotensinogen conversion to angiotensin I, may also play a role in the renin-angiotensin system (RAS). Through its function in V-type ATPase (v-ATPase) assembly and acidification of the lysosome it regulates protein degradation and may control different signaling pathways important for proper brain development, synapse morphology and synaptic transmission. The protein is Renin receptor of Mus musculus (Mouse).